The sequence spans 539 residues: MRFDIKKVLELAEKDFETAWRETRALIKDKHIDNKYPRLKPVYGKPHPVMETIERLRQAYLRMGFEEMINPVIVDEMEIYKQFGPEAMAVLDRCFYLAGLPRPDVGLGNEKVEIIKNLGIDIDEEKKERLREVLHLYKKGAIDGDDLVFEIAKALNVSNEMGLKVLETAFPEFKDLKPESTTLTLRSHMTSGWFITLSSLIKKRKLPLKLFSIDRCFRREQREDRSHLMSYHSASCVVVGEDVSVDDGKVVAEGLLAQFGFTKFKFKPDEKKSKYYTPETQTEVYAYHPKLGEWIEVATFGVYSPIALAKYNIDVPVMNLGLGVERLAMIIYGYEDVRAMVYPQFYEYRLSDRDIAGMIRVDKVPILDEFYNFANELIDICIANKDKESPCSVEVKREFNFNGERRVIKVEIFENEPNKKLLGPSVLNEVYVYDGNIYGIPPTFEGVKEQYIPILKKAKEEGVSTNIRYIDGIIYKLVAKIEEALVSNVDEFKFRVPIVRSLSDINLKIDELALKQIMGENKVIDVRGPVFLNAKVEIK.

Substrate-binding positions include 188 to 190, 233 to 235, 275 to 276, and Asn319; these read HMT, SAS, and YY.

Belongs to the class-II aminoacyl-tRNA synthetase family. O-phosphoseryl-tRNA(Cys) synthetase subfamily. As to quaternary structure, homotetramer. Interacts with SepCysS.

It catalyses the reaction tRNA(Cys) + O-phospho-L-serine + ATP = O-phospho-L-seryl-tRNA(Cys) + AMP + diphosphate. Catalyzes the attachment of O-phosphoserine (Sep) to tRNA(Cys). The sequence is that of O-phosphoserine--tRNA(Cys) ligase (sepS) from Methanocaldococcus jannaschii (strain ATCC 43067 / DSM 2661 / JAL-1 / JCM 10045 / NBRC 100440) (Methanococcus jannaschii).